The following is a 1030-amino-acid chain: MDLPSLALIVGAAAFSPNPDERRAAEQSLNQLQHTPQHLIRILQIIVDGGSDLSVRQSASIHFKNFIAKHWEPHSGDQNIILPSDKNVVRNQILVFVSQVPPILRVQMGECLKTIIYADYPEQWPELLDWVKQNLQKPQVYGALFVLRILSSKYEFKSDEDRAPIHRVVEETFPHLLNIFNNLVHVENPSLEVADHIKLICKIFWSCIYLELPRPLFDPNFFNAWMGLFLNILERPVPVEGQPEDPELRKSWGWWKAKKWIAHILNRLYTRFGDLKLQNPDNKAFAQMFQINYAAKILECHLKLLNAIRIGGYLPDRVINLILQYLSNSISKSSMYNLLQPHLNTLLFEIVFPLMCFNDNDQMLWDEDPHEYVRKGYDIIEDLYSPRTASMDFVTELVRKRGKENFPKFIQFVVDIFKRYNEASLENKPYRLKDGALLAVGTLCDKLRQTEPYKSELENMLVQHVFPEFSSPAGHLRAKAAWVAGQYANIDFSDQSNFSKALHCVISGMCDLELPVRVDSVFALRSFIEACKDLDEIRPVLPQLLDEFFKLMKEVENEDLAFTLETIVYKFGEEISPYALGLCQNLASAFWRCIDTDNGDDETDDAGALAAVGCLRAISTILESISSLPHLYGQIEPQLLPIMRKMLTTDGQDVFEEVLEIVSYITTFSPTISLEMWSLWPLMMEALVDWAIDFFPNILVPLHNYISRGTGHYLTCKEPDYQQNLWNVISVLMANKNIDDSDLEPAPKLLGIVLQTCKGQVDQWVEPYLRITLDRLRGAEKSSFKCLLVEVVANAFYYNTPLALGILQRFGIATEIFTLWFQMLQEKKKSGARSNFKREHDKKVCILGLTSLFSLPAGQLPGEVLPHVFRALLELLVAYKDQLAEAAKAEEEEEDEDGDDDDMDEFQTDDEDEDGDDENPDETDGSTLRKLAAQAKDFRSYSDDDDFSDDDFSDDEELESPIDEVDPFVLFMDAVTAMQVSDSPRFQSLTQTLDPHYHGLASTIAQHTELRRAEILKEKLEKQSSATVAS.

Residue Met-1 is modified to N-acetylmethionine. Residues 25-99 (AEQSLNQLQH…RNQILVFVSQ (75 aa)) enclose the Importin N-terminal domain. Disordered stretches follow at residues 886–928 (AAKA…GSTL) and 940–964 (SYSDDDDFSDDDFSDDEELESPIDE). Composition is skewed to acidic residues over residues 890–924 (EEEEEDEDGDDDDMDEFQTDDEDEDGDDENPDETD) and 943–964 (DDDDFSDDDFSDDEELESPIDE).

This sequence belongs to the importin beta family.

The protein localises to the cytoplasm. The protein resides in the nucleus. In terms of biological role, functions probably in nuclear protein import, either by acting as autonomous nuclear transport receptor or as an adapter-like protein in association with other importin subunits. This Arabidopsis thaliana (Mouse-ear cress) protein is Importin beta-like SAD2 homolog.